The chain runs to 240 residues: NAD-dependent protein deacylase Sir2 (240 aa).

In terms of domain architecture, Deacetylase sirtuin-type spans 1–235 (MQVTVLSGAG…PTLLQRLPEL (235 aa)). NAD(+) is bound at residue 8–28 (GAGISAESGVPTFRDAETGLW). Substrate is bound by residues tyrosine 53 and arginine 56. Residue 86–89 (QNID) coordinates NAD(+). The active-site Proton acceptor is histidine 104. Residues cysteine 112, cysteine 115, cysteine 138, and cysteine 140 each contribute to the Zn(2+) site. Residues 177 to 179 (GTS), 203 to 205 (NPE), and alanine 221 each bind NAD(+).

The protein belongs to the sirtuin family. Class III subfamily. In terms of assembly, interacts with both Ku and LigD; may form a trimeric complex during NHEJ. Zn(2+) is required as a cofactor.

The protein resides in the cytoplasm. It catalyses the reaction N(6)-succinyl-L-lysyl-[protein] + NAD(+) + H2O = 2''-O-succinyl-ADP-D-ribose + nicotinamide + L-lysyl-[protein]. The enzyme catalyses N(6)-acetyl-L-lysyl-[protein] + NAD(+) + H2O = 2''-O-acetyl-ADP-D-ribose + nicotinamide + L-lysyl-[protein]. Functionally, NAD-dependent lysine deacetylase and desuccinylase that specifically removes acetyl and succinyl groups on target proteins. Modulates the activities of several proteins which are inactive in their acylated form. Involved in non-homologous end joining (NHEJ) repair of blunt, 5' overhang and 3' overhang DNA double strand breaks (DSB). Overexpression increases the efficiency of NHEJ of the above DSBs 2-fold with no effect on repair fidelity. The protein is NAD-dependent protein deacylase Sir2 (sir2) of Mycolicibacterium smegmatis (strain ATCC 700084 / mc(2)155) (Mycobacterium smegmatis).